A 426-amino-acid chain; its full sequence is Serine--tRNA ligase (426 aa).

Position 231-233 (231-233) interacts with L-serine; it reads TAE. ATP-binding positions include 262–264 and V278; that span reads RRE. L-serine is bound at residue E285. An ATP-binding site is contributed by 349 to 352; sequence EVSS. S384 contributes to the L-serine binding site.

It belongs to the class-II aminoacyl-tRNA synthetase family. Type-1 seryl-tRNA synthetase subfamily. In terms of assembly, homodimer. The tRNA molecule binds across the dimer.

The protein resides in the cytoplasm. The enzyme catalyses tRNA(Ser) + L-serine + ATP = L-seryl-tRNA(Ser) + AMP + diphosphate + H(+). It carries out the reaction tRNA(Sec) + L-serine + ATP = L-seryl-tRNA(Sec) + AMP + diphosphate + H(+). The protein operates within aminoacyl-tRNA biosynthesis; selenocysteinyl-tRNA(Sec) biosynthesis; L-seryl-tRNA(Sec) from L-serine and tRNA(Sec): step 1/1. Catalyzes the attachment of serine to tRNA(Ser). Is also able to aminoacylate tRNA(Sec) with serine, to form the misacylated tRNA L-seryl-tRNA(Sec), which will be further converted into selenocysteinyl-tRNA(Sec). The polypeptide is Serine--tRNA ligase (Chlamydia caviae (strain ATCC VR-813 / DSM 19441 / 03DC25 / GPIC) (Chlamydophila caviae)).